The sequence spans 204 residues: MILGIDEAGRGCLAGSLFVAGVVCGEKTALEFLEMGLKDSKKLGPKKRFFLEDKIKTHGEIKFWVVKKSANEIDNLGLGACLKLAVQEILENGRSLANQIKIDGNTAFGLNKRYPNIQTIIKGDERIAQIAMASVLAKAFKDREMRQLHALFKEYGWDKNCGYGTKQHIEAMIKLGATPFHRHSFTLKNRILNPKLLDVEQRLI.

Residues 1-197 (MILGIDEAGR…KNRILNPKLL (197 aa)) enclose the RNase H type-2 domain. Residues Asp6, Glu7, and Asp103 each contribute to the a divalent metal cation site.

The protein belongs to the RNase HII family. The cofactor is Mn(2+). Mg(2+) is required as a cofactor.

The protein localises to the cytoplasm. It catalyses the reaction Endonucleolytic cleavage to 5'-phosphomonoester.. In terms of biological role, endonuclease that specifically degrades the RNA of RNA-DNA hybrids. In Helicobacter pylori (strain Shi470), this protein is Ribonuclease HII.